A 677-amino-acid chain; its full sequence is Transcription factor IIIB 90 kDa subunit (677 aa).

The segment at 2–33 (TGRVCRGCGGTDIELDAARGDAVCTACGSVLE) adopts a TFIIB-type zinc-finger fold. The Zn(2+) site is built by C6, C9, C25, and C28. Repeat copies occupy residues 91 to 172 (RHIH…LLAR) and 185 to 269 (LYIP…EFED). Disordered regions lie at residues 340 to 368 (KGGL…TEDE) and 385 to 413 (LLGG…SLLD). Phosphothreonine is present on T365. Residue S450 is modified to Phosphoserine. Disordered regions lie at residues 501–521 (YKEH…ASTA) and 544–653 (RGLS…EDGE). S553 bears the Phosphoserine mark. Acidic residues predominate over residues 640 to 653 (EEADEEEPDEEDGE).

It belongs to the TFIIB family. As to quaternary structure, TFIIIB comprises at least the TATA-binding protein (TBP) and the B-related factor 1 (BRF1/TFIIIB90). Interacts with BDP1. Interacts with MAF1.

The protein localises to the nucleus. In terms of biological role, general activator of RNA polymerase which utilizes different TFIIIB complexes at structurally distinct promoters. The isoform 1 is involved in the transcription of tRNA, adenovirus VA1, 7SL and 5S RNA. Isoform 2 is required for transcription of the U6 promoter. The polypeptide is Transcription factor IIIB 90 kDa subunit (BRF1) (Homo sapiens (Human)).